Here is a 57-residue protein sequence, read N- to C-terminus: Large ribosomal subunit protein bL32 (57 aa).

Residues 1–22 form a disordered region; it reads MAVPKKKTSKSKRDKRRATWRH.

This sequence belongs to the bacterial ribosomal protein bL32 family.

This chain is Large ribosomal subunit protein bL32, found in Nostoc punctiforme (strain ATCC 29133 / PCC 73102).